The following is a 73-amino-acid chain: Disintegrin lachesin (73 aa).

The Disintegrin domain maps to 1–73; that stretch reads EAGEECDCGA…ADCPRNGYYG (73 aa). Intrachain disulfides connect Cys6/Cys21, Cys8/Cys16, Cys15/Cys38, Cys29/Cys35, Cys34/Cys59, and Cys47/Cys66. Residues 51 to 53 carry the Cell attachment site motif; that stretch reads RGD. A disordered region spans residues 51–73; the sequence is RGDNPDDRCTGQSADCPRNGYYG.

It belongs to the venom metalloproteinase (M12B) family. P-II subfamily. P-IIa sub-subfamily. Monomer (disintegrin). Expressed by the venom gland.

Its subcellular location is the secreted. In terms of biological role, inhibits fibrinogen interaction with platelets. Acts by binding to alpha-IIb/beta-3 (ITGA2B/ITGB3) on the platelet surface and inhibits aggregation induced by ADP, thrombin, platelet-activating factor and collagen. The protein is Disintegrin lachesin of Lachesis muta muta (Bushmaster).